The sequence spans 61 residues: Small ribosomal subunit protein uS14 (61 aa).

C24, C27, C40, and C43 together coordinate Zn(2+).

It belongs to the universal ribosomal protein uS14 family. Zinc-binding uS14 subfamily. As to quaternary structure, part of the 30S ribosomal subunit. Contacts proteins S3 and S10. The cofactor is Zn(2+).

Binds 16S rRNA, required for the assembly of 30S particles and may also be responsible for determining the conformation of the 16S rRNA at the A site. The protein is Small ribosomal subunit protein uS14 of Streptococcus equi subsp. zooepidemicus (strain H70).